The following is a 201-amino-acid chain: Small ribosomal subunit protein uS4c (201 aa).

An S4 RNA-binding domain is found at 89 to 149 (MRLDNILFRL…DKPKSGALIK (61 aa)).

It belongs to the universal ribosomal protein uS4 family. In terms of assembly, part of the 30S ribosomal subunit. Contacts protein S5. The interaction surface between S4 and S5 is involved in control of translational fidelity.

The protein resides in the plastid. Its function is as follows. One of the primary rRNA binding proteins, it binds directly to 16S rRNA where it nucleates assembly of the body of the 30S subunit. With S5 and S12 plays an important role in translational accuracy. The chain is Small ribosomal subunit protein uS4c (rps4) from Cuscuta exaltata (Tall dodder).